Here is a 292-residue protein sequence, read N- to C-terminus: E3 ubiquitin-protein ligase RNF144A (292 aa).

The segment at 16–236 is TRIAD supradomain; the sequence is PLVSCKLCLG…YDKGPCRNKL (221 aa). Residues Cys-20, Cys-23, Cys-43, Cys-46, Cys-111, Cys-116, Cys-135, Cys-138, Cys-143, Cys-146, His-151, Cys-156, Cys-185, and Cys-188 each coordinate Zn(2+). The segment at 20–70 adopts an RING-type 1 zinc-finger fold; sequence CKLCLGEYPAEQMTTIAQCQCIFCTLCLKQYVELLIKEGLETAISCPDAAC. Residues 91 to 156 form an IBR-type zinc finger; it reads QRYKKLQFER…KARWHPGQGC (66 aa). The RING-type 2; atypical zinc-finger motif lies at 185–214; sequence CPKCRVYIERDEGCAQMMCKNCKHAFCWYC. Cys-198 is a catalytic residue. Zn(2+)-binding residues include Cys-203, Cys-206, Cys-211, Cys-214, His-226, and Cys-232. A helical membrane pass occupies residues 250–270; that stretch reads VVGIFAGFGLLLLVASPFLLL.

This sequence belongs to the RBR family. RNF144 subfamily. As to quaternary structure, self-associates. Interacts with UBE2L3. Autoubiquitinated.

It is found in the cell membrane. Its subcellular location is the cytoplasmic vesicle membrane. It carries out the reaction [E2 ubiquitin-conjugating enzyme]-S-ubiquitinyl-L-cysteine + [acceptor protein]-L-lysine = [E2 ubiquitin-conjugating enzyme]-L-cysteine + [acceptor protein]-N(6)-ubiquitinyl-L-lysine.. The protein operates within protein modification; protein ubiquitination. Functionally, E3 ubiquitin-protein ligase which accepts ubiquitin from E2 ubiquitin-conjugating enzymes UBE2L3 and UBE2L6 in the form of a thioester and then directly transfers the ubiquitin to targeted substrates. Mediates the ubiquitination and degradation of the DNA damage kinase PRKDC during DNA damage. Positively regulates DNA virus or exogenous cytosolic DNA-triggered innate immune response by mediating STING1 ubiquitination and increasing its 'Lys-6'-linked ubiquitination and translocation from the endoplasmic reticulum to the Golgi leading to downstream signaling pathways. Plays a positive role in EGF-dependent cell proliferation by prolonging EGF/EGFR signaling during EGF stimulation through EGFR ubiquitination. Increases ERK activity independently of EGFR signaling by promoting polyubiquitination and subsequent degradation of VRK3 in the cytosol. The chain is E3 ubiquitin-protein ligase RNF144A (Rnf144a) from Mus musculus (Mouse).